A 237-amino-acid chain; its full sequence is Urease accessory protein UreF (237 aa).

The protein belongs to the UreF family. In terms of assembly, ureD, UreF and UreG form a complex that acts as a GTP-hydrolysis-dependent molecular chaperone, activating the urease apoprotein by helping to assemble the nickel containing metallocenter of UreC. The UreE protein probably delivers the nickel.

It is found in the cytoplasm. Required for maturation of urease via the functional incorporation of the urease nickel metallocenter. In Streptococcus salivarius (strain 57.I), this protein is Urease accessory protein UreF.